A 562-amino-acid polypeptide reads, in one-letter code: MVKIRIRSPLWYDGVDNAPHRSYLKAIGFTEEDFSKPIVGVLASWSELGPCNYHTLELAKYVKEGIKEAGGVGLAAPTIVVNDGINMGTPGMRYSLISRDLIADTIEAQFNAHGVDAWVGIGGCDKTQPGIMMAMVRLDIPAVYLYGGTAEAGWLGERELTIEDTFEAVGAYLAGRITLEDLKRIEELSFPSYGTCQGLFTANTMAMIGEALGLSLLGSASPPATSSRRRAFAIASGRAVLKAAELGITPRKVVTYDALYNAAVTLFATAGSTNAILHLLAIAHEAGVKFTLDDFDEISKKVPVIAALRPAGPYAMQDLDKIGGVPRILKKLYKAGLLRGEALTVEGETIGKLLDRWQPPPLPEAGVLYDVDRPYKPYSGIRILRGNLAPNGAVMKVGAAERLKFEGRAKVYDSEAEAFKAVASGEIKAGDVVVIRYEGPKGAPGMPEMLKITAAIVGAGLGEVVALITDGRFSGATRGIMVGHVSPEAAVGGPIALVQNGDRIVIDGEAGLLKLELGEEELERRRKNWSPPPPKYKGGLLAKYASLVQQADKGAVTSPPVL.

Cys51 provides a ligand contact to [2Fe-2S] cluster. A Mg(2+)-binding site is contributed by Asp83. Cys124 serves as a coordination point for [2Fe-2S] cluster. Positions 125 and 126 each coordinate Mg(2+). N6-carboxylysine is present on Lys126. Cys196 provides a ligand contact to [2Fe-2S] cluster. Glu448 is a Mg(2+) binding site. Ser474 (proton acceptor) is an active-site residue.

It belongs to the IlvD/Edd family. As to quaternary structure, homodimer. It depends on [2Fe-2S] cluster as a cofactor. Mg(2+) serves as cofactor.

The enzyme catalyses (2R)-2,3-dihydroxy-3-methylbutanoate = 3-methyl-2-oxobutanoate + H2O. It carries out the reaction (2R,3R)-2,3-dihydroxy-3-methylpentanoate = (S)-3-methyl-2-oxopentanoate + H2O. It functions in the pathway amino-acid biosynthesis; L-isoleucine biosynthesis; L-isoleucine from 2-oxobutanoate: step 3/4. Its pathway is amino-acid biosynthesis; L-valine biosynthesis; L-valine from pyruvate: step 3/4. Its function is as follows. Functions in the biosynthesis of branched-chain amino acids. Catalyzes the dehydration of (2R,3R)-2,3-dihydroxy-3-methylpentanoate (2,3-dihydroxy-3-methylvalerate) into 2-oxo-3-methylpentanoate (2-oxo-3-methylvalerate) and of (2R)-2,3-dihydroxy-3-methylbutanoate (2,3-dihydroxyisovalerate) into 2-oxo-3-methylbutanoate (2-oxoisovalerate), the penultimate precursor to L-isoleucine and L-valine, respectively. The polypeptide is Dihydroxy-acid dehydratase (Pyrobaculum aerophilum (strain ATCC 51768 / DSM 7523 / JCM 9630 / CIP 104966 / NBRC 100827 / IM2)).